The primary structure comprises 47 residues: MAKGKRTFQPNNRRRARTHGFRLRMRTRAGRAIIAGRRRKGRRELTA.

Belongs to the bacterial ribosomal protein bL34 family.

The chain is Large ribosomal subunit protein bL34 from Mycobacteroides abscessus (strain ATCC 19977 / DSM 44196 / CCUG 20993 / CIP 104536 / JCM 13569 / NCTC 13031 / TMC 1543 / L948) (Mycobacterium abscessus).